A 521-amino-acid chain; its full sequence is Ribonuclease Y 1 (521 aa).

The chain crosses the membrane as a helical span at residues 1-21; the sequence is MEIVISAIIGLLIGGTVVFVI. The tract at residues 51 to 87 is disordered; that stretch reads IKKESENKAKDFESRARKNVEQDIHKQKSTLKNKESQ. One can recognise a KH domain in the interval 211–271; it reads TVSVLALPND…VRRELARRTI (61 aa). In terms of domain architecture, HD spans 337–430; it reads ALNQSLEVAT…VHAAYTLSSS (94 aa).

It belongs to the RNase Y family.

It localises to the cell membrane. Endoribonuclease that initiates mRNA decay. The chain is Ribonuclease Y 1 from Bdellovibrio bacteriovorus (strain ATCC 15356 / DSM 50701 / NCIMB 9529 / HD100).